A 192-amino-acid polypeptide reads, in one-letter code: Signal peptidase complex catalytic subunit SEC11C (192 aa).

Residues 1 to 28 (MVRAGAVGTHLPTSSLDIFGDLRKMNKR) are Cytoplasmic-facing. A helical; Signal-anchor for type II membrane protein transmembrane segment spans residues 29–48 (QLYYQVLNFAMIVSSALMIW). Over 49–192 (KGLIVLTGSE…GAYVLLKRES (144 aa)) the chain is Lumenal. Residues Ser-68, His-108, and Asp-134 each act as charge relay system in the active site. The tract at residues 177-188 (ALVAVMGAYVLL) is C-terminal short (CTS) helix.

It belongs to the peptidase S26B family. Component of the signal peptidase complex paralog C (SPC-C) composed of a catalytic subunit SEC11C and three accessory subunits SPCS1, SPCS2 and SPCS3. Within the complex, interacts with SPCS2 and SPCS3. The complex induces a local thinning of the ER membrane which is used to measure the length of the signal peptide (SP) h-region of protein substrates. This ensures the selectivity of the complex towards h-regions shorter than 18-20 amino acids. Post-translationally, may undergo processing at the N-terminus.

The protein localises to the endoplasmic reticulum membrane. It carries out the reaction Cleavage of hydrophobic, N-terminal signal or leader sequences from secreted and periplasmic proteins.. Functionally, catalytic component of the signal peptidase complex (SPC) which catalyzes the cleavage of N-terminal signal sequences from nascent proteins as they are translocated into the lumen of the endoplasmic reticulum. Specifically cleaves N-terminal signal peptides that contain a hydrophobic alpha-helix (h-region) shorter than 18-20 amino acids. The protein is Signal peptidase complex catalytic subunit SEC11C (Sec11c) of Rattus norvegicus (Rat).